Reading from the N-terminus, the 1759-residue chain is MESDKSMACLNRILMNKMMFVEDKISTLKMVADYYQKEVKYDFDAVESPREAPVFRCTCRFLGYTIMTQGIGKKNPKQEAARQMLLLLSGDVETNPGPVQSRPVYYRYNDPRYTRLEKAIERRDDKIKTLIKELRRQIKNRKIYSQGMFDKLTKQISDGIKDGVGSEQMNGNLTRICDFLENTLPGLQANIQATVIDTTDKYVSLKEDIMKIVLVILLVRLLMVWKKYRASLCVILIFIFKFYGFDQKLIDLIMDLKNKIFSQGALEDTVEEVVYHPWFHTCGKIIFAVMAFLTIKKIPGKQDWDSYITRLDRIPKSIEGAKKITDYCSEYFNIANDQIKMMVLGKTKEELQRANGLYGEIQAWAQEVRQYLELDQRNKIDLDTETANRVEQLWIKGLKFKSEPLLSKEMSALVHTTLLPAKQLYEYVSCSPVKGGGPRMRPICLWLVGESGVGKTEMVYPLCIDVLREMGMIKKDDFHHQVYGRQVETEFWDGYKGQKIVIYDDAFQKKDDKTAANPEIFEVIRSCNTFPQHLHMAALHDKNTFSAAELLLYTTNDYNVKLESITFPDAFFNRMGDMAYKVSPKKEYGIETEKGNSGKTYLKLDKSKLDKTKAIDLSVYEFQKIVRDEKSDAGWIDSGSPLDYEDFAKLVCSKWKEAKQSSMNKLKFLEEYAIRAQVGSEENSEYGDCIDFVDDIAKRLQKGETLEEIEFDYASDPEMFTQYYHFKSTIKPASRWQKYKDRMDICLSDCKTYLAKKYEEIKKILAEHPILTILGMIGVALSALAMYYWFSKSLDPVEAEVAPSGDAKTVRLPRKLVEIGASGDVKTQKIVKPVVETEWHRNNKGEIEISCDECGMHRMSAFNNMTDEEFDNCTYEDLNKDQKRELAQWSTKDSWLGRFFLSRDRKNKVGIWAEVGQSGDVKTNKAQIKRVEAGAEELVTVALTQGCSDDAAHNLMIDVFQKNTYRMSYFRGDKRYQLGNCTFVRGWSFIMPYHFVQAVFARRLPPNTIISLSQQMSEDLMQIPLSHFFSAGVDNFYLTDNCVRLPFKNGDFRDCVMVNLHSRMCTPHRDLVRHFILTSDQGKLKGSFSGAMATFHVNNMGLYRVYNWLNAVRPCDKKIEIFHPEDGFEYPEESYIQRDCYEYNAPTRTGDCGSIIGLYNKYLERKIIGMHIAGNDAEEHGYACPLTQECLETAFSALVNKNKKNISSQFYYEIPNMVDPLGDSSVPEGKFYALGKSSIRVGQAVNSSIIPSRIYGKLSVPTMKPALLKPTILNNKVHNPLLSGLKKCGVDTAVLSDDEVLSASQDVCRVMLNQYNKNLNKTKYQRILTYEEAIRGTQDDEFMCAINRTTSPGFPYAQMKRNAPGKQQWMGFGEEFDFTSNYALALRKDVEQLIEDCASGKISNVIFVDTLKDERRDIAKVNVGKTRVFSAGPQHFVVAFRQYFLPFAAWLMHNRISNEVAVGTNVYSSDWERIAKRLKTKGSHVIAGDFGNFDGSLVAQILWAIFWEIFVVWLKQFIDIENSEGKRILCICLGLWSHLVHSVHIYEDNVYMWTHSQPSGNPFTVIINCLYNSIIMRLSWIRVMEKFQPRLKSMKWFNEYVALITYGDDNVLNIDAKVVEWFNQINISEVMTEMRHEYTDEAKTGDIVKSRKLEDIFFLKRKFRFSPELQRHVAPLKIEVIYEMLNWSRRSIDPDEILMSNIETAFREVVYHGKEEYDKLRSAVLALKVPQELPENPQILTYNQYLHDIEYLADPLYDF.

Residues 23–90 enclose the DRBM domain; it reads DKISTLKMVA…ARQMLLLLSG (68 aa). A coiled-coil region spans residues 113 to 140; sequence YTRLEKAIERRDDKIKTLIKELRRQIKN. An SF3 helicase domain is found at 421 to 595; it reads AKQLYEYVSC…KEYGIETEKG (175 aa). Position 449-456 (449-456) interacts with ATP; the sequence is GESGVGKT. Positions 950–1191 constitute a Peptidase C3 domain; the sequence is DAAHNLMIDV…YACPLTQECL (242 aa). Active-site for picornain 3C-like protease activity residues include His994, Asp1054, and Cys1152. Residues 1483–1622 enclose the RdRp catalytic domain; that stretch reads SHVIAGDFGN…NIDAKVVEWF (140 aa).

Protein 1A might be expressed through a ribosomal skip from one codon to the next without formation of a peptide bond.

It carries out the reaction RNA(n) + a ribonucleoside 5'-triphosphate = RNA(n+1) + diphosphate. In terms of biological role, protein 1A functions as a suppressor of RNA-mediated gene silencing, an antiviral defense mechanism of insect cells. Binds to long dsRNA and to a lesser extent, to siRNA. Its function is as follows. RNA-directed RNA polymerase replicates genomic and antigenomic RNA. In Drosophila C virus (strain EB) (DCV), this protein is Replicase polyprotein.